A 201-amino-acid polypeptide reads, in one-letter code: uncharacterized protein (201 aa).

The protein belongs to the mimivirus L885/R898 family.

This is an uncharacterized protein from Acanthamoeba polyphaga (Amoeba).